The chain runs to 91 residues: RING finger protein Z (91 aa).

Residue Gly2 is the site of N-myristoyl glycine; by host attachment. An RING-type; atypical zinc finger spans residues Cys35–Cys71. The PTAP/PSAP motif motif lies at Pro85 to Pro88.

Belongs to the arenaviridae Z protein family. In terms of assembly, interacts with protein NP; this interaction probably directs the encapsidated genome to budding sites. Interacts (via RING domain) with polymerase L; this interaction inhibits viral transcription and replication, Z partially blocks the product exit tunnel for the releasing nascent RNA product. Interacts with the glycoprotein complex; this interaction plays a role in virion budding. Interacts with host eIF4E; this interaction results in eIF4E reduced affinity for its substrate, the 5'-m7 G cap structure. Interacts (via late-budding domain) with host TSG101; this interaction is essential for budding and release of viral particles. Interacts with host RPLP0; this interaction may serve to load ribosome-like particles inside the virion. Interacts with host PML; this interaction induces PML bodies redistribution in the cytoplasm upon viral infection. Myristoylation is required for the role of RING finger protein Z in assembly and budding.

The protein resides in the virion. Its subcellular location is the host cytoplasm. The protein localises to the host perinuclear region. It localises to the host cell membrane. Functionally, plays a crucial role in virion assembly and budding. Expressed late in the virus life cycle, it acts as an inhibitor of viral transcription and RNA synthesis by interacting with the viral polymerase L. Presumably recruits the NP encapsidated genome to cellular membranes at budding sites via direct interaction with NP. Plays critical roles in the final steps of viral release by interacting with host TSG101, a member of the vacuolar protein-sorting pathway and using other cellular host proteins involved in vesicle formation pathway. The budding of the virus progeny occurs after association of protein Z with the viral glycoprotein complex SSP-GP1-GP2 at the cell periphery, step that requires myristoylation of protein Z. Also selectively represses protein production by associating with host eIF4E. In cell-based minigenome assay, has an inhibitory effect on the ribonucleoprotein machinery (vRNP), which is responsible for the replication and transcription of the viral genome. This is RING finger protein Z from Latino mammarenavirus (isolate Rat/Bolivia/MARU 1924/1965) (LATV).